The primary structure comprises 139 residues: Actin-depolymerizing factor 1 (139 aa).

Positions 5–139 (ASGMAVHDDC…GLDVIQSRAN (135 aa)) constitute an ADF-H domain.

The protein belongs to the actin-binding proteins ADF family.

Actin-depolymerizing protein. Severs actin filaments (F-actin) and binds to actin monomers. The protein is Actin-depolymerizing factor 1 (ADF1) of Petunia hybrida (Petunia).